A 99-amino-acid chain; its full sequence is NADH-ubiquinone oxidoreductase chain 4L (99 aa).

3 helical membrane-spanning segments follow: residues 4–24 (MFLM…VFVS), 29–49 (LLST…FLFF), and 63–83 (FFLT…VSMI).

This sequence belongs to the complex I subunit 4L family.

It is found in the mitochondrion membrane. The catalysed reaction is a ubiquinone + NADH + 5 H(+)(in) = a ubiquinol + NAD(+) + 4 H(+)(out). Its function is as follows. Core subunit of the mitochondrial membrane respiratory chain NADH dehydrogenase (Complex I) that is believed to belong to the minimal assembly required for catalysis. Complex I functions in the transfer of electrons from NADH to the respiratory chain. The immediate electron acceptor for the enzyme is believed to be ubiquinone. The sequence is that of NADH-ubiquinone oxidoreductase chain 4L (mt:ND4L) from Anopheles gambiae (African malaria mosquito).